We begin with the raw amino-acid sequence, 927 residues long: LPS-assembly protein LptD (927 aa).

Residues 1–22 (MALKSPAFRKKFPLLVTGSLLA) form the signal peptide. Residues 60-100 (LPPRPVHSTASVSSNGTVTSESSSSGEQVAGPQLVTEAKGK) are disordered. A compositionally biased stretch (low complexity) spans 70–86 (SVSSNGTVTSESSSSGE).

This sequence belongs to the LptD family. As to quaternary structure, component of the lipopolysaccharide transport and assembly complex. Interacts with LptE and LptA.

It localises to the cell outer membrane. Together with LptE, is involved in the assembly of lipopolysaccharide (LPS) at the surface of the outer membrane. The sequence is that of LPS-assembly protein LptD from Pseudomonas syringae pv. tomato (strain ATCC BAA-871 / DC3000).